Here is a 204-residue protein sequence, read N- to C-terminus: uncharacterized protein (204 aa).

A run of 4 helical transmembrane segments spans residues 21–50, 92–114, 150–172, and 176–198; these read AWIV…LLFF, FFTA…WWWF, LGLR…VLSI, and LLAS…ETIL.

It is found in the cell membrane. This is an uncharacterized protein from Aquifex aeolicus (strain VF5).